The sequence spans 55 residues: U2-theraphotoxin-Cg1a (55 aa).

Positions 1–19 (DSPAWLKSMERIFQSEERE) are excised as a propeptide. Intrachain disulfides connect cysteine 20-cysteine 34, cysteine 27-cysteine 39, and cysteine 33-cysteine 47.

This sequence belongs to the neurotoxin 10 (Hwtx-1) family. 06 (F4b) subfamily. As to expression, expressed by the venom gland.

It is found in the secreted. Functionally, probable ion channel inhibitor. The protein is U2-theraphotoxin-Cg1a of Chilobrachys guangxiensis (Chinese earth tiger tarantula).